Here is a 377-residue protein sequence, read N- to C-terminus: MMARPWNFSAGPSALPEAVLQQAAAEMLDWHGSGMSVMEMSHRGKHFVQICDEAEADLRELLGLPADYAVMFMQGGGLGENAIVPMNLMGRRSTPAADFVVTGHWSTRSHKEAGRYGDAQIAASAAEATEIDGQAQSSWTWLPPVDTWRVRKDSAYLHLCSNETIGGVEFTEWPDPASLGAPDVPLVVDVSSHFLSRPLDIARAGLVFAGAQKNAGPAGVTVVIARRDLLGHALPICPSAFDYANVAADHSRYNTPPTFAIYVMGLVFKWIKAHGGVRGMEEANRAKAELLYGYLDGSAFYRNPVQPAVRSRMNVPFVLRDESLNDAFLQGAEAAGLMQLKGHKSVGGMRASIYNAMPLAGVQALIDYLKEFERRHG.

Position 43 (Arg43) interacts with L-glutamate. Pyridoxal 5'-phosphate-binding residues include Trp105, Thr164, Asp189, and Gln212. Lys213 is modified (N6-(pyridoxal phosphate)lysine). Residue 254–255 (NT) participates in pyridoxal 5'-phosphate binding.

This sequence belongs to the class-V pyridoxal-phosphate-dependent aminotransferase family. SerC subfamily. Homodimer. It depends on pyridoxal 5'-phosphate as a cofactor.

It is found in the cytoplasm. It catalyses the reaction O-phospho-L-serine + 2-oxoglutarate = 3-phosphooxypyruvate + L-glutamate. It carries out the reaction 4-(phosphooxy)-L-threonine + 2-oxoglutarate = (R)-3-hydroxy-2-oxo-4-phosphooxybutanoate + L-glutamate. It participates in amino-acid biosynthesis; L-serine biosynthesis; L-serine from 3-phospho-D-glycerate: step 2/3. It functions in the pathway cofactor biosynthesis; pyridoxine 5'-phosphate biosynthesis; pyridoxine 5'-phosphate from D-erythrose 4-phosphate: step 3/5. Functionally, catalyzes the reversible conversion of 3-phosphohydroxypyruvate to phosphoserine and of 3-hydroxy-2-oxo-4-phosphonooxybutanoate to phosphohydroxythreonine. The chain is Phosphoserine aminotransferase from Bordetella bronchiseptica (strain ATCC BAA-588 / NCTC 13252 / RB50) (Alcaligenes bronchisepticus).